A 271-amino-acid chain; its full sequence is MSTPGRSDQDAGAGTPPVDPAVSFTVLVPARLASTRLPRKALADLGGLPMVVRVAQRCALSGASAVVVATDSEEIRAACAAHGVRALMTRADHPTGSDRLAEACVQLGLDGRDIVVNVQGDEPLIEPGLIDACAGLLAQRSDCVMSTAAHALDDVEEYGNPNVVKVVTDAVGRALYFSRAPLPWWRDGYASGVLALPDPAPLRHIGIYGYSAGFLRRFPSLPESPLERIESLEQLRVLWHGERIAVHLSAVRPGPGIDTPEDLERVRRHFG.

The protein belongs to the KdsB family.

The protein localises to the cytoplasm. It catalyses the reaction 3-deoxy-alpha-D-manno-oct-2-ulosonate + CTP = CMP-3-deoxy-beta-D-manno-octulosonate + diphosphate. It functions in the pathway nucleotide-sugar biosynthesis; CMP-3-deoxy-D-manno-octulosonate biosynthesis; CMP-3-deoxy-D-manno-octulosonate from 3-deoxy-D-manno-octulosonate and CTP: step 1/1. Its pathway is bacterial outer membrane biogenesis; lipopolysaccharide biosynthesis. Functionally, activates KDO (a required 8-carbon sugar) for incorporation into bacterial lipopolysaccharide in Gram-negative bacteria. This Leptothrix cholodnii (strain ATCC 51168 / LMG 8142 / SP-6) (Leptothrix discophora (strain SP-6)) protein is 3-deoxy-manno-octulosonate cytidylyltransferase.